Consider the following 983-residue polypeptide: Bifunctional glutamine synthetase adenylyltransferase/adenylyl-removing enzyme (983 aa).

The adenylyl removase stretch occupies residues 1–468 (MTVENAKALF…KQYAALFAQA (468 aa)). An adenylyl transferase region spans residues 473–983 (AASGNLVFTG…FDKLVGHGAD (511 aa)).

Belongs to the GlnE family. Mg(2+) serves as cofactor.

It carries out the reaction [glutamine synthetase]-O(4)-(5'-adenylyl)-L-tyrosine + phosphate = [glutamine synthetase]-L-tyrosine + ADP. The catalysed reaction is [glutamine synthetase]-L-tyrosine + ATP = [glutamine synthetase]-O(4)-(5'-adenylyl)-L-tyrosine + diphosphate. Involved in the regulation of glutamine synthetase GlnA, a key enzyme in the process to assimilate ammonia. When cellular nitrogen levels are high, the C-terminal adenylyl transferase (AT) inactivates GlnA by covalent transfer of an adenylyl group from ATP to specific tyrosine residue of GlnA, thus reducing its activity. Conversely, when nitrogen levels are low, the N-terminal adenylyl removase (AR) activates GlnA by removing the adenylyl group by phosphorolysis, increasing its activity. The regulatory region of GlnE binds the signal transduction protein PII (GlnB) which indicates the nitrogen status of the cell. The protein is Bifunctional glutamine synthetase adenylyltransferase/adenylyl-removing enzyme of Brucella suis biovar 1 (strain 1330).